Reading from the N-terminus, the 82-residue chain is Delta-conotoxin SVIE (82 aa).

Residues 1 to 22 (MKLTCVMIVAVLFLTTWTFVTA) form the signal peptide. A propeptide spanning residues 23 to 51 (DDSRYGLKNLFPKARHEMKNPEASKLNKR) is cleaved from the precursor. 3 disulfide bridges follow: Cys54/Cys69, Cys61/Cys73, and Cys68/Cys77. Pro65 carries the post-translational modification 4-hydroxyproline.

This sequence belongs to the conotoxin O1 superfamily. As to expression, expressed by the venom duct.

It localises to the secreted. In terms of biological role, delta-conotoxins bind to site 6 of voltage-gated sodium channels (Nav) and inhibit the inactivation process. Impairs rapid channel inactivation of Nav1.4/SCN4A (Kd=500 nM). Interacts with a conserved hydrophobic triad (YFV) in the domain-4 voltage sensor of sodium channels. In vivo, injection of both native or synthetic peptide induces twitching of back limbs, running in circles, and spastic paralysis. This is Delta-conotoxin SVIE (SO6) from Conus striatus (Striated cone).